The following is a 441-amino-acid chain: Transcriptional regulatory protein ZraR (441 aa).

Residues 7–121 (DILVVDDDVS…RLQETLEKAL (115 aa)) enclose the Response regulatory domain. Aspartate 56 carries the post-translational modification 4-aspartylphosphate. The Sigma-54 factor interaction domain occupies 141-370 (MIGSSPAMQH…LENAIERAVV (230 aa)). Positions 172, 173, 329, and 359 each coordinate ATP. Positions 421-440 (KTEAARQLGITRKTLLAKLS) form a DNA-binding region, H-T-H motif.

Phosphorylated by ZraS.

It localises to the cytoplasm. Activity of the ZraS/ZraR two-component system is repressed by the zinc-bound form of ZraP, which probably interacts with the periplasmic region of ZraS. Its function is as follows. Part of the Zra signaling pathway, an envelope stress response (ESR) system composed of the periplasmic accessory protein ZraP, the histidine kinase ZraS and the transcriptional regulator ZraR. The ZraPSR system contributes to antibiotic resistance and is important for membrane integrity in the presence of membrane-targeting biocides. ZraR is a member of the two-component regulatory system ZraS/ZraR. When activated by ZraS, acts in conjunction with sigma-54 to regulate the expression of zraP in the presence of high Zn(2+) or Pb(2+) concentrations. Also positively autoregulates the expression of the zraSR operon. This chain is Transcriptional regulatory protein ZraR (zraR), found in Salmonella typhi.